The chain runs to 280 residues: UDP-3-O-acyl-N-acetylglucosamine deacetylase (280 aa).

Zn(2+) is bound by residues His-77, His-238, and Asp-242. His-265 serves as the catalytic Proton donor.

The protein belongs to the LpxC family. Zn(2+) is required as a cofactor.

It catalyses the reaction a UDP-3-O-[(3R)-3-hydroxyacyl]-N-acetyl-alpha-D-glucosamine + H2O = a UDP-3-O-[(3R)-3-hydroxyacyl]-alpha-D-glucosamine + acetate. It functions in the pathway glycolipid biosynthesis; lipid IV(A) biosynthesis; lipid IV(A) from (3R)-3-hydroxytetradecanoyl-[acyl-carrier-protein] and UDP-N-acetyl-alpha-D-glucosamine: step 2/6. Its function is as follows. Catalyzes the hydrolysis of UDP-3-O-myristoyl-N-acetylglucosamine to form UDP-3-O-myristoylglucosamine and acetate, the committed step in lipid A biosynthesis. In Trichormus variabilis (strain ATCC 29413 / PCC 7937) (Anabaena variabilis), this protein is UDP-3-O-acyl-N-acetylglucosamine deacetylase.